A 451-amino-acid chain; its full sequence is Trigger factor (451 aa).

The PPIase FKBP-type domain maps to 162–243 (GDYAIIDITT…VQQSKERKLP (82 aa)).

Belongs to the FKBP-type PPIase family. Tig subfamily.

Its subcellular location is the cytoplasm. The catalysed reaction is [protein]-peptidylproline (omega=180) = [protein]-peptidylproline (omega=0). In terms of biological role, involved in protein export. Acts as a chaperone by maintaining the newly synthesized protein in an open conformation. Functions as a peptidyl-prolyl cis-trans isomerase. This is Trigger factor from Corynebacterium aurimucosum (strain ATCC 700975 / DSM 44827 / CIP 107346 / CN-1) (Corynebacterium nigricans).